Reading from the N-terminus, the 471-residue chain is Glutamate--tRNA ligase (471 aa).

Residues 9–19 carry the 'HIGH' region motif; it reads PSPTGYLHVGG. Cys-98, Cys-100, Cys-125, and His-127 together coordinate Zn(2+). A 'KMSKS' region motif is present at residues 237 to 241; it reads KLSKR. Lys-240 provides a ligand contact to ATP.

The protein belongs to the class-I aminoacyl-tRNA synthetase family. Glutamate--tRNA ligase type 1 subfamily. In terms of assembly, monomer. Zn(2+) serves as cofactor.

It localises to the cytoplasm. The enzyme catalyses tRNA(Glu) + L-glutamate + ATP = L-glutamyl-tRNA(Glu) + AMP + diphosphate. Catalyzes the attachment of glutamate to tRNA(Glu) in a two-step reaction: glutamate is first activated by ATP to form Glu-AMP and then transferred to the acceptor end of tRNA(Glu). In Shigella dysenteriae serotype 1 (strain Sd197), this protein is Glutamate--tRNA ligase.